A 690-amino-acid polypeptide reads, in one-letter code: Calpain-9 (690 aa).

Positions 1–24 (MPYLYRAPGPQAHPVPKDARITHS) are disordered. Residues 42 to 337 (LFEDADFPAS…FDKVEICNLT (296 aa)) form the Calpain catalytic domain. Positions 81, 83, and 88 each coordinate Ca(2+). The active site involves cysteine 97. Glutamate 167 serves as a coordination point for Ca(2+). Active-site residues include histidine 254 and asparagine 278. Residues glutamate 284, aspartate 291, leucine 312, aspartate 314, and glutamate 316 each coordinate Ca(2+). The domain III stretch occupies residues 338 to 521 (PDALEEDAIH…PPDQETEEEQ (184 aa)). The interval 498-519 (GNVDIDLPEPPKPTPPDQETEE) is disordered. 3 consecutive EF-hand domains span residues 518 to 552 (EEEQRFRALFEQVAGEDMEVTAEELEYVLNAVLQK), 561 to 589 (LSLISCKNIISLMDTSGNGKLEFDEFKVF), and 591 to 626 (DKLKQWINLFLRFDADKSGTMSTYELRTALKAAGFQ). A domain IV region spans residues 522–690 (RFRALFEQVA…NEFIHLTMNI (169 aa)). 10 residues coordinate Ca(2+): aspartate 574, serine 576, asparagine 578, lysine 580, glutamate 585, aspartate 604, aspartate 606, serine 608, threonine 610, and glutamate 615.

The protein belongs to the peptidase C2 family. As to expression, expressed predominantly in stomach.

In terms of biological role, calcium-regulated non-lysosomal thiol-protease. This chain is Calpain-9 (CAPN9), found in Homo sapiens (Human).